A 166-amino-acid polypeptide reads, in one-letter code: Probable DHNTP pyrophosphohydrolase (166 aa).

The Nudix hydrolase domain maps to 42-166 (DLQLSASALV…FKKYYRYKNI (125 aa)). Residues 73 to 94 (GHVELKESPLDTAIREFHEETG) carry the Nudix box motif. Residues glutamate 88 and glutamate 92 each coordinate Mg(2+).

It belongs to the Nudix hydrolase family. In terms of assembly, monomer. Requires Mg(2+) as cofactor.

The protein operates within cofactor biosynthesis; tetrahydrofolate biosynthesis; 2-amino-4-hydroxy-6-hydroxymethyl-7,8-dihydropteridine diphosphate from 7,8-dihydroneopterin triphosphate: step 1/4. In terms of biological role, probably mediates the removal of pyrophosphate from dihydroneopterin triphosphate (DHNTP), a possible step in the pterin branch of the folate synthesis pathway. In Lactococcus lactis subsp. cremoris (strain MG1363), this protein is Probable DHNTP pyrophosphohydrolase (folQ).